The following is a 190-amino-acid chain: (S)-2-hydroxypropylphosphonic acid epoxidase (190 aa).

Residues 10–60 form the HTH cro/C1-type domain; the sequence is KAHLEALLATRKMTLEHLQDVRHDATQVYFDGLEHLQNVAQYLAIPLSEFF. Positions 20–40 form a DNA-binding region, H-T-H motif; it reads RKMTLEHLQDVRHDATQVYFD. Substrate is bound by residues Arg-87, Tyr-95, 125-128, and Glu-132; that span reads NGGH. Residues His-128, Glu-132, and His-171 each coordinate Fe cation. The region spanning 128–176 is the Cupin type-2 domain; sequence HGSREIVYVTRGAVRVRWVGDNDELKEDVLNEGDSIFILPNVPHSFTNH.

This sequence belongs to the non-heme iron-dependent dioxygenase family. In terms of assembly, homotrimer. Requires Fe(2+) as cofactor.

The catalysed reaction is (S)-2-hydroxypropylphosphonate + H2O2 = (1R,2S)-epoxypropylphosphonate + 2 H2O. It functions in the pathway antibiotic biosynthesis; fosfomycin biosynthesis. In terms of biological role, non-heme-dependent dioxygenase that catalyzes the oxidative epoxidation of (S)-2-hydroxypropylphosphonate into (1R,2S)-epoxypropylphosphonate, the final step in the biosynthesis of fosfomycin antibiotic. The sequence is that of (S)-2-hydroxypropylphosphonic acid epoxidase (hppE) from Pseudomonas syringae.